Reading from the N-terminus, the 411-residue chain is BRO1 domain-containing protein BROX (411 aa).

The BRO1 domain maps to 90–408 (FKWTDTLQGQ…DIKPQKDTGC (319 aa)). Position 283 is an N6-acetyllysine (Lys-283). A disordered region spans residues 372-411 (AFDLTKRPKDDSTKPKPEEEVKPVKEPDIKPQKDTGCYIS). The segment covering 375–404 (LTKRPKDDSTKPKPEEEVKPVKEPDIKPQK) has biased composition (basic and acidic residues). At Cys-408 the chain carries Cysteine methyl ester. A lipid anchor (S-farnesyl cysteine) is attached at Cys-408. Residues 409-411 (YIS) constitute a propeptide, removed in mature form.

It belongs to the BROX family. In terms of assembly, monomer. Interacts with CHMP4B. Interacts with CHMP5: this interaction allows the recruitment of BROX to cellular membranes. Interacts with SYN2; this interaction promotes SYN2 ubiquitination and facilitates the relaxation of mechanical stress imposed by compressive actin fibers at the rupture site. In terms of processing, farnesylation is required for nuclear envelope localization.

It is found in the nucleus membrane. Its function is as follows. Nuclear envelope-associated factor that is involved in the nuclear envelope ruptures during interphase (NERDI) repair, where it is locally recruited by CHMP5 and reduces cytoskeletal stress through its action on SYN2 to help reseal the ruptured membrane. The sequence is that of BRO1 domain-containing protein BROX from Homo sapiens (Human).